The chain runs to 406 residues: Autotransporter heptosyltransferase TibC (406 aa).

The ADP-D-glycero-beta-D-manno-heptose site is built by T107, L108, and G109. The active-site Proton acceptor is D110. ADP-D-glycero-beta-D-manno-heptose is bound by residues Q224, T226, K230, R257, L281, G302, and E326. C339, C342, C358, and C370 together coordinate Fe(3+).

This sequence belongs to the glycosyltransferase 9 family. Homododecamer composed of 6 homodimers forming a ring. Requires Fe(3+) as cofactor.

It carries out the reaction ADP-D-glycero-beta-D-manno-heptose + L-seryl-[protein] = O-(D-glycero-alpha-D-manno-heptosyl)-L-seryl-[protein] + ADP + H(+). Glycosylates adhesin TibA. Specifically adds anomer D-glycero-beta-D-manno-heptose. Cannot use ADP-L-glycero-beta-D-manno-heptose as a sugar donor. The sequence is that of Autotransporter heptosyltransferase TibC from Escherichia coli O78:H11 (strain H10407 / ETEC).